The following is a 664-amino-acid chain: DNA ligase (664 aa).

NAD(+) contacts are provided by residues 32 to 36 (DKEYD) and 80 to 81 (SL). K122 (N6-AMP-lysine intermediate) is an active-site residue. NAD(+)-binding residues include R144, E178, and K314. Residues C407, C410, C423, and C429 each coordinate Zn(2+). The region spanning 587–664 (IDENPFMDKT…NEEEFSNKIK (78 aa)) is the BRCT domain.

The protein belongs to the NAD-dependent DNA ligase family. LigA subfamily. The cofactor is Mg(2+). Mn(2+) serves as cofactor.

It catalyses the reaction NAD(+) + (deoxyribonucleotide)n-3'-hydroxyl + 5'-phospho-(deoxyribonucleotide)m = (deoxyribonucleotide)n+m + AMP + beta-nicotinamide D-nucleotide.. Functionally, DNA ligase that catalyzes the formation of phosphodiester linkages between 5'-phosphoryl and 3'-hydroxyl groups in double-stranded DNA using NAD as a coenzyme and as the energy source for the reaction. It is essential for DNA replication and repair of damaged DNA. The protein is DNA ligase of Clostridium botulinum (strain Loch Maree / Type A3).